A 141-amino-acid polypeptide reads, in one-letter code: Hemoglobin subunit alpha-2 (141 aa).

The region spanning Val-1–Arg-141 is the Globin domain. Position 58 (His-58) interacts with O2. His-87 serves as a coordination point for heme b.

The protein belongs to the globin family. Heterotetramer of two alpha chains and two beta chains. As to expression, red blood cells.

Its function is as follows. Involved in oxygen transport from the lung to the various peripheral tissues. In Tachyglossus aculeatus aculeatus (Southeast Australian short-beaked echidna), this protein is Hemoglobin subunit alpha-2.